The following is a 299-amino-acid chain: Protease HtpX homolog (299 aa).

The next 2 membrane-spanning stretches (helical) occupy residues I14–L34 and L39–F59. H143 lines the Zn(2+) pocket. E144 is a catalytic residue. H147 serves as a coordination point for Zn(2+). 2 consecutive transmembrane segments (helical) span residues I158–W178 and I198–V218. Position 227 (E227) interacts with Zn(2+).

It belongs to the peptidase M48B family. Requires Zn(2+) as cofactor.

It localises to the cell membrane. The chain is Protease HtpX homolog from Streptococcus mutans serotype c (strain ATCC 700610 / UA159).